Consider the following 170-residue polypeptide: MARVEL domain-containing protein 1 (170 aa).

Residues 1–38 (MEGERPRSDTVTTTVSSHMETISLGGSIAYDRSFLRSP) lie on the Cytoplasmic side of the membrane. Residues 34–167 (FLRSPTGVLL…STYFSFQAWR (134 aa)) form the MARVEL domain. Residues 39-59 (TGVLLLMEIMFGLLVWALIAG) form a helical membrane-spanning segment. Residues 60-67 (SEYFLFSA) are Extracellular-facing. A helical transmembrane segment spans residues 68 to 88 (FGWVMFVAVFYWVLSVFFFLL). Residues 89-102 (HLTRANTRITKVPW) are Cytoplasmic-facing. A helical membrane pass occupies residues 103–123 (SLVGLCFNGSAFVLYLIAAVV). The Extracellular segment spans residues 124–145 (EASSVNKDVHQHHNYNSWTASS). Residues 146–166 (FFAFIVTVCYALSTYFSFQAW) traverse the membrane as a helical segment. Topologically, residues 167-170 (RTKS) are cytoplasmic.

The protein localises to the membrane. Its subcellular location is the nucleus. The sequence is that of MARVEL domain-containing protein 1 (marveld1) from Xenopus laevis (African clawed frog).